Reading from the N-terminus, the 28-residue chain is Dermaseptin-1 (28 aa).

Glutamine 28 carries the post-translational modification Glutamine amide.

As to expression, expressed by the skin glands.

It is found in the secreted. Functionally, has antimicrobial activity. The sequence is that of Dermaseptin-1 from Phyllomedusa tomopterna (Tiger-striped leaf frog).